Consider the following 634-residue polypeptide: Chaperone protein HtpG (634 aa).

An a; substrate-binding region spans residues 1–342 (MTVETDKQTL…SSDLSLNVSR (342 aa)). Residues 343–559 (EILQSGPVVD…QGDLGLQMRQ (217 aa)) are b. The interval 560-634 (LLEASGQAVP…LNKLLLELSA (75 aa)) is c.

This sequence belongs to the heat shock protein 90 family. As to quaternary structure, homodimer.

The protein localises to the cytoplasm. Molecular chaperone. Has ATPase activity. The protein is Chaperone protein HtpG of Xanthomonas axonopodis pv. citri (strain 306).